The following is a 310-amino-acid chain: p-hydroxybenzoic acid efflux pump subunit AaeA (310 aa).

The helical transmembrane segment at 12–32 (VITLLLVIIAIVLIFRIWVFY) threads the bilayer.

The protein belongs to the membrane fusion protein (MFP) (TC 8.A.1) family.

Its subcellular location is the cell inner membrane. In terms of biological role, forms an efflux pump with AaeB. This chain is p-hydroxybenzoic acid efflux pump subunit AaeA, found in Erwinia tasmaniensis (strain DSM 17950 / CFBP 7177 / CIP 109463 / NCPPB 4357 / Et1/99).